A 461-amino-acid chain; its full sequence is Cysteine--tRNA ligase (461 aa).

A Zn(2+)-binding site is contributed by C28. Positions 30–40 (ITVYDLCHIGH) match the 'HIGH' region motif. 3 residues coordinate Zn(2+): C209, H234, and E238. Positions 266 to 270 (KMSKS) match the 'KMSKS' region motif. K269 contacts ATP.

It belongs to the class-I aminoacyl-tRNA synthetase family. In terms of assembly, monomer. Zn(2+) is required as a cofactor.

It is found in the cytoplasm. It catalyses the reaction tRNA(Cys) + L-cysteine + ATP = L-cysteinyl-tRNA(Cys) + AMP + diphosphate. This Pectobacterium carotovorum subsp. carotovorum (strain PC1) protein is Cysteine--tRNA ligase.